Reading from the N-terminus, the 82-residue chain is Cell division topological specificity factor (82 aa).

This sequence belongs to the MinE family.

Its function is as follows. Prevents the cell division inhibition by proteins MinC and MinD at internal division sites while permitting inhibition at polar sites. This ensures cell division at the proper site by restricting the formation of a division septum at the midpoint of the long axis of the cell. This chain is Cell division topological specificity factor, found in Hahella chejuensis (strain KCTC 2396).